The following is a 726-amino-acid chain: A-type inclusion protein A25 homolog (726 aa).

Residues 342-361 (TNTGIEEPHATGGDKEDQPI) are disordered. Residues 347–360 (EEPHATGGDKEDQP) show a composition bias toward basic and acidic residues. 4 consecutive repeat copies span residues 612–634 (RELEEERRRVKDLESRLDECTRN), 639–661 (QEVDALRSRIRELENKLTDCIES), 667–689 (TEISRLQSRISDLERQLNECRGN), and 691–713 (TEISRLESRISDLERQLNDCRRN). Positions 612–713 (RELEEERRRV…ERQLNDCRRN (102 aa)) are 4 X approximate tandem repeats.

This sequence belongs to the poxviridae A25 protein family. As to quaternary structure, interacts (via N-terminus) with protein A26.

The protein resides in the virion. Its function is as follows. Structural protein that forms a matrix surrounding the mature virion (MV) through interaction with protein A26. Presence of protein A25 in the virion structurally prevents direct virus-cell fusion mechanism. The polypeptide is A-type inclusion protein A25 homolog (Camelus).